We begin with the raw amino-acid sequence, 323 residues long: MSNLTLAQYLQQKNGNLTPELAQVIETIANSCKKIDHAIQKGALADLLGSAGNENVQGETQKKLDVLSNDFLIDALKVHPHVGGLASEELDEFTPGQQDGKYLVLFDPLDGSSNIDINMCVGTIFSILPAKNSITQTQDFMQAGTEQVAAGYVLYGPSTMMALTCGEGVAFFTFDPESQTFILTSDAIQLDADTQEFAINASNQRHWEEPVKRYIDELLAGKTSVRGKDFNMRWVACMVADIHRILCRSGIFMYPYDLKDPSKAGRLRLMYEANPMSFLIEQAGGSATTGRVRIMDIQPNDLHQRVPVIIGSKNEVDLVTSYH.

Residues Glu88, Asp107, Leu109, and Asp110 each contribute to the Mg(2+) site. Substrate is bound by residues 110–113 and Asn200; that span reads DGSS. Mg(2+) is bound at residue Glu272.

This sequence belongs to the FBPase class 1 family. Homotetramer. It depends on Mg(2+) as a cofactor.

It is found in the cytoplasm. It carries out the reaction beta-D-fructose 1,6-bisphosphate + H2O = beta-D-fructose 6-phosphate + phosphate. Its pathway is carbohydrate biosynthesis; gluconeogenesis. The protein is Fructose-1,6-bisphosphatase class 1 of Acinetobacter baylyi (strain ATCC 33305 / BD413 / ADP1).